A 201-amino-acid chain; its full sequence is LexA repressor (201 aa).

The H-T-H motif DNA-binding region spans 27 to 47; sequence RMEISSAFGFASPNAAEDHLK. Active-site for autocatalytic cleavage activity residues include S116 and K153.

The protein belongs to the peptidase S24 family. Homodimer.

It catalyses the reaction Hydrolysis of Ala-|-Gly bond in repressor LexA.. In terms of biological role, represses a number of genes involved in the response to DNA damage (SOS response), including recA and lexA. In the presence of single-stranded DNA, RecA interacts with LexA causing an autocatalytic cleavage which disrupts the DNA-binding part of LexA, leading to derepression of the SOS regulon and eventually DNA repair. The sequence is that of LexA repressor from Dechloromonas aromatica (strain RCB).